Reading from the N-terminus, the 117-residue chain is Small ribosomal subunit protein bS6 (117 aa).

The tract at residues 96-117 is disordered; that stretch reads HDEGPSVQMQKRDEREGRRERR.

It belongs to the bacterial ribosomal protein bS6 family.

Its function is as follows. Binds together with bS18 to 16S ribosomal RNA. In Jannaschia sp. (strain CCS1), this protein is Small ribosomal subunit protein bS6.